A 248-amino-acid polypeptide reads, in one-letter code: Probable transcriptional regulatory protein BT_2363 (248 aa).

Belongs to the TACO1 family.

The protein resides in the cytoplasm. In Bartonella tribocorum (strain CIP 105476 / IBS 506), this protein is Probable transcriptional regulatory protein BT_2363.